The following is a 477-amino-acid chain: ATP synthase subunit beta, chloroplastic (477 aa).

156-163 contributes to the ATP binding site; that stretch reads GGAGVGKT.

This sequence belongs to the ATPase alpha/beta chains family. F-type ATPases have 2 components, CF(1) - the catalytic core - and CF(0) - the membrane proton channel. CF(1) has five subunits: alpha(3), beta(3), gamma(1), delta(1), epsilon(1). CF(0) has four main subunits: a(1), b(1), b'(1) and c(9-12).

Its subcellular location is the plastid. The protein localises to the chloroplast thylakoid membrane. The catalysed reaction is ATP + H2O + 4 H(+)(in) = ADP + phosphate + 5 H(+)(out). In terms of biological role, produces ATP from ADP in the presence of a proton gradient across the membrane. The catalytic sites are hosted primarily by the beta subunits. In Bigelowiella natans (Pedinomonas minutissima), this protein is ATP synthase subunit beta, chloroplastic.